The sequence spans 198 residues: MHYPEPISKLIDSFMKLPGIGPKTAQRLAFHTLDMKEDDVVQFAKALVDVKRELTYCSVCGHITENDPCYICEDKQRDRSVICVVEDDKDVIAMEKMREYKGLYHVLHGSISPMDGIGPEDINIPSLIERLKSDEVSELILAMNPNLEGESTAMYISRLVKPIGIKVTRLAQGLSVGGDLEYADEVTLSKAITGRTEM.

The C4-type zinc finger occupies 57 to 72 (CSVCGHITENDPCYIC). The 96-residue stretch at 80–175 (SVICVVEDDK…KVTRLAQGLS (96 aa)) folds into the Toprim domain.

Belongs to the RecR family.

In terms of biological role, may play a role in DNA repair. It seems to be involved in an RecBC-independent recombinational process of DNA repair. It may act with RecF and RecO. The sequence is that of Recombination protein RecR from Staphylococcus aureus (strain Mu3 / ATCC 700698).